The following is a 524-amino-acid chain: Thioredoxin reductase 2, mitochondrial (524 aa).

A mitochondrion-targeting transit peptide spans 1–36; the sequence is MAAMAVALRGLGGRFRWRTQAVAGGVRGAARGAAAG. 41-70 contacts FAD; the sequence is DLLVVGGGSGGLACAKEAAQLGRKVAVVDY. C86 and C91 are disulfide-bonded. Residues K175 and K329 each carry the N6-succinyllysine modification. The active-site Proton acceptor is the H497. The cysteinyl-selenocysteine (Cys-Sec) cross-link spans 522-523; the sequence is CU. A non-standard amino acid (selenocysteine) is located at residue U523.

It belongs to the class-I pyridine nucleotide-disulfide oxidoreductase family. As to quaternary structure, homodimer. The cofactor is FAD. Highly expressed in the prostate, ovary, liver, testis, uterus, colon and small intestine. Intermediate levels in brain, skeletal muscle, heart and spleen. Low levels in placenta, pancreas, thymus and peripheral blood leukocytes. According to PubMed:10608886, high levels in kidney, whereas according to PubMed:9923614, levels are low. High expression is observed in the adrenal cortex.

It is found in the mitochondrion. It carries out the reaction [thioredoxin]-dithiol + NADP(+) = [thioredoxin]-disulfide + NADPH + H(+). Functionally, involved in the control of reactive oxygen species levels and the regulation of mitochondrial redox homeostasis. Maintains thioredoxin in a reduced state. May play a role in redox-regulated cell signaling. In Homo sapiens (Human), this protein is Thioredoxin reductase 2, mitochondrial.